Consider the following 1571-residue polypeptide: Neurexin-3 (1571 aa).

A signal peptide spans 1–27; it reads MSFTLHSVFFTLKVSIFLGSLVGLCLG. The Laminin G-like 1 domain occupies 28–202; the sequence is LEFMGLPNQW…SVQLEAEGPC (175 aa). Topologically, residues 28–1496 are extracellular; the sequence is LEFMGLPNQW…EVIRESSSTT (1469 aa). N-linked (GlcNAc...) asparagine glycosylation is found at Asn-58 and Asn-105. Residues 198–235 enclose the EGF-like 1 domain; the sequence is AEGPCGERPCENGGICFLLDGHPTCDCSTTGYGGTLCS. 3 disulfides stabilise this stretch: Cys-202/Cys-213, Cys-207/Cys-222, and Cys-224/Cys-234. Laminin G-like domains are found at residues 258 to 440 and 447 to 639; these read VATF…VFKC and DPIN…KSSC. The Ca(2+) site is built by Asp-304, Leu-321, and Met-374. 5 disulfide bridges follow: Cys-404–Cys-440, Cys-610–Cys-639, Cys-647–Cys-658, Cys-652–Cys-667, and Cys-669–Cys-679. One can recognise an EGF-like 2 domain in the interval 643–680; that stretch reads SAKQCDSYPCKNNAVCKDGWNRFICDCTGTGYWGRTCE. Laminin G-like domains are found at residues 685–857 and 871–1046; these read ILSY…IDYC and DPVT…ERGC. Ca(2+) contacts are provided by Asp-732 and Leu-749. Asn-757 carries N-linked (GlcNAc...) asparagine glycosylation. Ca(2+) is bound at residue Arg-807. Disulfide bonds link Cys-1018-Cys-1046, Cys-1053-Cys-1064, Cys-1058-Cys-1073, and Cys-1075-Cys-1085. Positions 1049–1086 constitute an EGF-like 3 domain; it reads PSTTCQEDSCANQGVCMQQWEGFTCDCSMTSYSGNQCN. Residues 1090–1290 enclose the Laminin G-like 6 domain; sequence ATYIFGKSGG…NPNIKINGSV (201 aa). Residues Asp-1142 and Ile-1159 each coordinate Ca(2+). N-linked (GlcNAc...) asparagine glycosylation is present at Asn-1189. The Ca(2+) site is built by Ile-1241 and Asn-1243. 2 N-linked (GlcNAc...) asparagine glycosylation sites follow: Asn-1287 and Asn-1331. The tract at residues 1324–1348 is disordered; that stretch reads ATTTTRKNRSTASIQPTSDDLVSSA. The span at 1333–1348 shows a compositional bias: polar residues; the sequence is STASIQPTSDDLVSSA. An O-linked (Xyl...) (heparan sulfate) serine glycan is attached at Ser-1347. The helical transmembrane segment at 1497–1517 threads the bilayer; that stretch reads GMVVGIVAAAALCILILLYAM. The Cytoplasmic portion of the chain corresponds to 1518-1571; that stretch reads YKYRNRDEGSYQVDETRNYISNSAQSNGTLMKEKQASSKSGHKKQKNKDKEYYV. The segment at 1539–1571 is disordered; the sequence is NSAQSNGTLMKEKQASSKSGHKKQKNKDKEYYV.

This sequence belongs to the neurexin family. The laminin G-like domain 2 binds to NXPH1. Specific isoforms bind to alpha-dystroglycan. The cytoplasmic C-terminal region binds to CASK. Specific isoforms bind neuroligins NLGN1, NLGN2 and NLGN3. Interacts with CLSTN3. In terms of processing, O-glycosylated; contains heparan sulfate. Heparan sulfate attachment is required for synapse development by mediating interactions with neuroligins. As to expression, brain and arteries (at protein level).

It localises to the presynaptic cell membrane. Functionally, neuronal cell surface protein that may be involved in cell recognition and cell adhesion. May mediate intracellular signaling. This Mus musculus (Mouse) protein is Neurexin-3 (Nrxn3).